A 743-amino-acid polypeptide reads, in one-letter code: Threonine--tRNA ligase (743 aa).

Low complexity predominate over residues 1–15 (MSADSPSSPASSQAA). Residues 1–30 (MSADSPSSPASSQAAEVQVRLPDGSLKTQP) are disordered. Residues 13–76 (QAAEVQVRLP…GEIADDENVV (64 aa)) enclose the TGS domain. The tract at residues 264–619 (DHRVLGKQHG…LIEHFAGAFP (356 aa)) is catalytic. The interval 354-404 (AWSTRLDKDDLSKDDEDKLIAAAEVFGVKLPDYKPSASNDAKKDVLHRWQL) is insert. Cys-416, His-467, and His-596 together coordinate Zn(2+).

Belongs to the class-II aminoacyl-tRNA synthetase family. In terms of assembly, homodimer. It depends on Zn(2+) as a cofactor.

The protein resides in the cytoplasm. The enzyme catalyses tRNA(Thr) + L-threonine + ATP = L-threonyl-tRNA(Thr) + AMP + diphosphate + H(+). Functionally, catalyzes the attachment of threonine to tRNA(Thr) in a two-step reaction: L-threonine is first activated by ATP to form Thr-AMP and then transferred to the acceptor end of tRNA(Thr). Also edits incorrectly charged L-seryl-tRNA(Thr). The polypeptide is Threonine--tRNA ligase (Rhodopirellula baltica (strain DSM 10527 / NCIMB 13988 / SH1)).